A 250-amino-acid chain; its full sequence is Uridylate kinase (250 aa).

Lys17–Gly20 lines the ATP pocket. Position 59 (Gly59) interacts with UMP. 2 residues coordinate ATP: Gly60 and Arg64. Residues Asp79 and Thr140–Thr147 each bind UMP. The ATP site is built by Thr167, Tyr173, and Asp176.

This sequence belongs to the UMP kinase family. In terms of assembly, homohexamer.

Its subcellular location is the cytoplasm. It catalyses the reaction UMP + ATP = UDP + ADP. Its pathway is pyrimidine metabolism; CTP biosynthesis via de novo pathway; UDP from UMP (UMPK route): step 1/1. Inhibited by UTP. In terms of biological role, catalyzes the reversible phosphorylation of UMP to UDP. The chain is Uridylate kinase from Myxococcus xanthus (strain DK1622).